Here is a 380-residue protein sequence, read N- to C-terminus: Dynactin subunit 2 (380 aa).

Positions 1–32 (MADPKFQNLPGIAYDQPDVYETPDDPELDTSD) are disordered. A compositionally biased stretch (acidic residues) spans 21–32 (ETPDDPELDTSD). Phosphoserine is present on residues Ser49, Ser58, and Ser86. Coiled-coil stretches lie at residues 100-135 (VQKC…QSYD) and 353-377 (ETFA…AAIS).

It belongs to the dynactin subunit 2 family. Subunit of dynactin, a multiprotein complex associated with dynein.

The protein resides in the cytoplasm. The protein localises to the cytoskeleton. It localises to the membrane. In terms of biological role, modulates cytoplasmic dynein binding to an organelle, and plays a role in prometaphase chromosome alignment and spindle organization during mitosis. May play a role in synapse formation during brain development. The sequence is that of Dynactin subunit 2 from Drosophila melanogaster (Fruit fly).